A 335-amino-acid polypeptide reads, in one-letter code: O(6)-methylguanine-induced apoptosis 2 (335 aa).

Basic and acidic residues predominate over residues Met-1–Ser-11. The segment at Met-1 to Asn-20 is disordered. STPGR repeat units follow at residues Pro-68 to Val-75, Pro-110 to Pro-118, Pro-149 to Ala-156, Gly-188 to Lys-215, Gly-226 to Ser-255, Leu-267 to His-284, and Pro-308 to Phe-317. At Tyr-73 the chain carries Phosphotyrosine.

Belongs to the STPG1 family.

The protein localises to the cytoplasm. It localises to the nucleus. In terms of biological role, may positively contribute to the induction of apoptosis triggered by O(6)-methylguanine. This is O(6)-methylguanine-induced apoptosis 2 (STPG1) from Bos taurus (Bovine).